A 282-amino-acid chain; its full sequence is Transmembrane protein 41B (282 aa).

Residues 1-36 are disordered; sequence MAKKRAGNRETESSPLVEQEPRPSKETPVPKGAQSP. The next 6 membrane-spanning stretches (helical) occupy residues 43–63, 102–122, 138–160, 188–208, 216–236, and 251–271; these read MSILLLVVIFACSACVMYLVF, TQVLLAYFATYIFLQTFAIPG, LALFLVCLCSGLGASFCYMLSYL, LINYIIFLRITPFLPNWFINI, PLGVFFLGTFLGVAPPSFVAI, and AVSWNSLLVLGVLAVVSILPV. The interval 131 to 242 is VTT domain; required for its function in autophagy; that stretch reads GYLYPFPLAL…FVAINAGTTL (112 aa).

The protein belongs to the TMEM41 family.

It localises to the endoplasmic reticulum membrane. Its subcellular location is the endomembrane system. It carries out the reaction a 1,2-diacyl-sn-glycero-3-phospho-L-serine(in) = a 1,2-diacyl-sn-glycero-3-phospho-L-serine(out). It catalyses the reaction cholesterol(in) = cholesterol(out). The enzyme catalyses a 1,2-diacyl-sn-glycero-3-phosphocholine(in) = a 1,2-diacyl-sn-glycero-3-phosphocholine(out). The catalysed reaction is a 1,2-diacyl-sn-glycero-3-phosphoethanolamine(in) = a 1,2-diacyl-sn-glycero-3-phosphoethanolamine(out). In terms of biological role, phospholipid scramblase involved in lipid homeostasis and membrane dynamics processes. Has phospholipid scramblase activity toward cholesterol and phosphatidylserine, as well as phosphatidylethanolamine and phosphatidylcholine. Required for autophagosome formation: participates in early stages of autophagosome biogenesis at the endoplasmic reticulum (ER) membrane by reequilibrating the leaflets of the ER as lipids are extracted by atg2 (atg2a or atg2b) to mediate autophagosome assembly. In addition to autophagy, involved in other processes in which phospholipid scramblase activity is required. Required for normal motor neuron development. In Danio rerio (Zebrafish), this protein is Transmembrane protein 41B.